The sequence spans 2615 residues: MKILLIIFVLIIWTETLADQSPGPGPVYADVVFLVDSSDHLGPKSFPFVKTFINKMINSLPIEANKYRVALAQYSDEFHSEFHLSTFKGRSPMLNHLKKNFQFIGGSLQIGKALQEAHRTYFSAPINGRDRKQFPPILVVLASAESEDEVEEASKALQKDGVKIISVGVQKASEENLKAMATSHFHFNLRTIRDLSTFSQNMTQIIKDVTKYKEGAVDADMQVHFPISCQKDSLADLVFLVDESLGTGGNLRHLQTFLENITSSMDVKENCMRLGLMSYSNSAKTISFLKSSTTQSEFQQQIKNLSIQVGKSNTGAAIDQMRRDGFSESYGSRRAQGVPQIAVLVTHRPSDDEVHDAALNLRLEDVNVFALSIQGANNTQLEEIVSYPPEQTISTLKSYADLETYSTKFLKKLQNEIWSQISTYAEQRNLDKTGCVDTKEADIHFLIDGSSSIQEKQFEQIKRFMLEVTEMFSIGPDKVRVGVVQYSDDTEVEFYITDYSNDIDLRKAIFNIKQLTGGTYTGKALDYILQIIKNGMKDRMSKVPCYLIVLTDGMSTDRVVEPAKRLRAEQITVHAVGIGAANKIELQEIAGKEERVSFGQNFDALKSIKNEVVREICAEKGCEDMKADIMFLVDSSWSIGNENFRKMKIFMKNLLTKIQIGADKTQIGVVQFSDKTKEEFQLNRYFTQQEISDAIDRMSLINEGTLTGKALNFVGQYFTHSKGARLGAKKFLILITDGVAQDDVRDPARILRGKDVTIFSVGVYNANRSQLEEISGDSSLVFHVENFDHLKALERKLIFRVCALHDCKRITLLDVVFVLDHSGSIKKQYQDHMINLTIHLVKKADVGRDRVQFGALKYSDQPNILFYLNTYSNRSAIIENLRKRRDTGGNTYTAKALKHANALFTEEHGSRIKQNVKQMLIVITDGESHDHDQLNDTALELRNKGITIFAVGVGKANQKELEGMAGNKNNTIYVDNFDKLKDVFTLVQERMCTEAPEVCHLQEADVIFLCDGSDRVSNSDFVTMTTFLSDLIDNFDIQSQRMKIGMAQFGSNYQSIIELKNSLTKTQWKTQIQNVSKSGGFPRIDFALKKVSNMFNLHAGGRRNAGVPQTLVVITSGDPRYDVADAVKTLKDLGICVLVLGIGDVYKEHLLPITGNSEKIITFQDFDKLKNVDVKKRIIREICQSCGKTNCFMDIVVGFDISTHVQGQPLFQGHPQLESYLPGILEDISSIKGVSCGAGTEAQVSLAFKVNSDQGFPAKFQIYQKAVFDSLLQVNVSGPTHLNAQFLRSLWDTFKDKSASRGQVLLIFSDGLQSESNIMLENQSDRLREAGLDALLVVSLNTTAHHEFSSFEFGKRFDYRTHLTIGMRELGKKLSQYLGNIAERTCCCTFCKCPGIPGPHGTRGLQAMKGSQGLKGSRGHRGEDGNPGVRGDTGPQGDKGIAGCPGAWGQKGLKGFSGPKGGHGDDGIDGLDGEEGCHGFPGIKGEKGDPGSQGSPGSRGAPGQYGEKGFPGDPGNPGQNNNIKGQKGSKGEQGRQGRSGQKGVQGSPSSRGSRGREGQRGLRGVSGEPGNPGPTGTLGAEGLQGPQGSQGNPGRKGEKGSQGQKGPQGSPGLMGAKGSTGRPGLLGKKGEPGLPGDLGPVGQTGQRGRQGDSGIPGYGQMGRKGVKGPRGFPGDAGQKGDIGNPGIPGGPGPKGFRGLALTVGLKGEEGSRGLPGPPGQRGIKGMAGQPVYSQCDLIRFLREHSPCWKEKCPAYPTELVFALDNSYDVTEESFNKTRDIITSIVNDLNIRENNCPVGARVAMVSYNSGTSYLIRWSDYNRKKQLLQQLSQIKYQDTTEPRDVGNAMRFVTRNVFKRTYAGANVRRVAVFFSNGQTASRSSIITATMEFSALDISPTVFAFDERVFLEAFGFDNTGTFQVIPVPPNGENQTLERLRRCALCYDKCFPNACIREAFLPEDSYMDVVFLIDNSRNIAKDEFKAVKALVSSVIDNFNIASDPLISDSGDRIALLSYSPWESSRRKMGTVKTEFDFITYDNQLLMKNHIQTSFQQLNGEATIGRALLWTTENLFPETPYLRKHKVIFVVSAGENYERKEFVKMMALRAKCQGYVIFVISLGSTRKDDMEELASYPLDQHLIQLGRIHKPDLNYIAKFLKPFLYSVRRGFNQYPPPMLEDACRLINLGGENIQNDGFQFVTELQEDFLGGNGFIGQELNSGRESPFVKTEDNGSDYLVYLPSQMFEPQKLMINYEKDQKSAEIASLTSGHENYGRKEEPDHTYEPGDVSLQEYYMDVAFLIDASQRVGSDEFKEVKAFITSVLDYFHIAPTPLTSTLGDRVAVLSYSPPGYMPNTEECPVYLEFDLVTYNSIHQMKHHLQDSQQLNGDVFIGHALQWTIDNVFVGTPNLRKNKVIFVISAGETNSLDKDVLRNVSLRAKCQGYSIFVFSFGPKHNDKELEELASHPLDHHLVQLGRTHKPDWNYIIKFVKPFVHLIRRAINKYPTEDMKATCVNMTSPNPENGGTENTVLLLPGIYEIKTENGDLFDEFDSQAQHLLVLGNNHSSGSETATDLMQKLYLLFSTEKLAMKDKEKAHLEEISALVVDKQQEKEDKEMEATDI.

A signal peptide spans 1–18 (MKILLIIFVLIIWTETLA). The segment at 19-1394 (DQSPGPGPVY…TCCCTFCKCP (1376 aa)) is nonhelical region. 7 VWFA domains span residues 30–209 (DVVF…IKDV), 236–413 (DLVF…LKKL), 442–612 (DIHF…KNEV), 628–797 (DIMF…ERKL), 814–987 (DVVF…FTLV), 1005–1178 (DVIF…KKRI), and 1194–1376 (DIVV…KLSQ). N-linked (GlcNAc...) asparagine glycans are attached at residues Asn-201 and Asn-260. The N-linked (GlcNAc...) asparagine glycan is linked to Asn-835. 6 Collagen-like domains span residues 1395–1446 (GIPG…GCPG), 1434–1490 (GPQG…KGDP), 1464–1520 (GDDG…PGQN), 1524–1580 (KGQK…TLGA), 1579–1629 (GAEG…LGKK), and 1674–1729 (GDAG…MAGQ). The triple-helical region stretch occupies residues 1395-1728 (GIPGPHGTRG…GQRGIKGMAG (334 aa)). The disordered stretch occupies residues 1404 to 1693 (GLQAMKGSQG…NPGIPGGPGP (290 aa)). The short motif at 1430-1432 (RGD) is the Cell attachment site element. Over residues 1511-1522 (PGDPGNPGQNNN) the composition is skewed to low complexity. 2 stretches are compositionally biased toward low complexity: residues 1601-1611 (SQGQKGPQGSP) and 1622-1641 (RPGLLGKKGEPGLPGDLGPV). The tract at residues 1729-2615 (QPVYSQCDLI…EDKEMEATDI (887 aa)) is nonhelical region. 3 VWFA domains span residues 1758–1965 (ELVF…MDVV), 1963–2154 (DVVF…AKFL), and 2291–2487 (DVAF…VKPF). Asn-2509 carries N-linked (GlcNAc...) asparagine glycosylation.

Belongs to the type VI collagen family. As to quaternary structure, trimers composed of three different chains: alpha-1(VI), alpha-2(VI), and alpha-3(VI) or alpha-5(VI) or alpha-6(VI). In terms of processing, prolines at the third position of the tripeptide repeating unit (G-X-Y) are hydroxylated in some or all of the chains. As to expression, expressed in skin, followed by lung, small intestine, colon and testis. In skin, it is expressed in the epidermis with strongest staining in suprabasal viable layers. In ATOD patients, it is absent in the most differentiated upper spinous and granular layers (at protein level).

It localises to the secreted. The protein resides in the extracellular space. Its subcellular location is the extracellular matrix. Functionally, collagen VI acts as a cell-binding protein. In Homo sapiens (Human), this protein is Collagen alpha-5(VI) chain (COL6A5).